The primary structure comprises 250 residues: MRIDLNCDLGEAFGNYSFGGDNQIIPLITSANIACGFHAGDENVMYDTIKLVKDNGVGIGAHPGLPDLKGFGRRNMDITPKEIYNLVVYQLGALDGFCKVHQTRINHVKPHGALYNMGAKDKNIAHAIAQAVYDFDSSLILVGLSNTLLITEAESLGLRTASEVFADRRYEDNGQLVSRKEADAVITNTEEALDQVLKMVIENKVVSKNGKEIDLKADTICVHGDGAHALEFVSQIREKLTKEGIDIQSL.

This sequence belongs to the LamB/PxpA family. As to quaternary structure, forms a complex composed of PxpA, PxpB and PxpC.

The catalysed reaction is 5-oxo-L-proline + ATP + 2 H2O = L-glutamate + ADP + phosphate + H(+). Functionally, catalyzes the cleavage of 5-oxoproline to form L-glutamate coupled to the hydrolysis of ATP to ADP and inorganic phosphate. The protein is 5-oxoprolinase subunit A of Staphylococcus haemolyticus (strain JCSC1435).